A 289-amino-acid polypeptide reads, in one-letter code: CCR4-associated factor 16 (289 aa).

The 243-residue stretch at 7 to 249 (IEVRNLTYKF…SEVVNAKVNG (243 aa)) folds into the ABC transporter domain. 41-48 (GANGAGKS) contacts ATP.

This sequence belongs to the ABC transporter superfamily. As to quaternary structure, interacts with CCR4 and SSN2.

It localises to the cytoplasm. It is found in the nucleus. This Saccharomyces cerevisiae (strain ATCC 204508 / S288c) (Baker's yeast) protein is CCR4-associated factor 16 (CAF16).